The primary structure comprises 370 residues: Endopolygalacturonase A (370 aa).

Residues 1 to 19 (MPSAKPLFCLATLAGAALA) form the signal peptide. Positions 20-32 (APAPSRATDFNKR) are excised as a propeptide. A disulfide bridge connects residues cysteine 35 and cysteine 50. 6 PbH1 repeats span residues 162-192 (SDNL…DISE), 193-214 (STYI…AINS), 215-235 (GENI…SIGS), 244-265 (VKNV…RIKT), 273-295 (VEDI…VIEQ), and 307-352 (SNGV…DITG). A disulfide bond links cysteine 209 and cysteine 225. The active site involves histidine 229. Asparagine 246 is a glycosylation site (N-linked (GlcNAc...) asparagine). Cystine bridges form between cysteine 335/cysteine 340 and cysteine 359/cysteine 368.

It belongs to the glycosyl hydrolase 28 family.

The protein localises to the secreted. It carries out the reaction (1,4-alpha-D-galacturonosyl)n+m + H2O = (1,4-alpha-D-galacturonosyl)n + (1,4-alpha-D-galacturonosyl)m.. In terms of biological role, involved in maceration and soft-rotting of plant tissue. Hydrolyzes the 1,4-alpha glycosidic bonds of de-esterified pectate in the smooth region of the plant cell wall. This chain is Endopolygalacturonase A (pgaA), found in Aspergillus awamori (Black koji mold).